The following is an 87-amino-acid chain: Potassium channel toxin Ttr-beta-KTx (87 aa).

The signal sequence occupies residues 1–19; the sequence is MERKWALLLFLGMVTLVSC. Positions 20 to 27 are excised as a propeptide; the sequence is GLREKHVQ. In terms of domain architecture, BetaSPN-type CS-alpha/beta spans 53-87; it reads QFGCPAYEGYCNNHCQDIKRKDGECHGFKCKCAKD. 3 disulfide bridges follow: C56–C77, C63–C82, and C67–C84.

The protein belongs to the long chain scorpion toxin family. Class 1 subfamily. In terms of tissue distribution, expressed by the venom gland.

Its subcellular location is the secreted. In terms of biological role, inhibits voltage-gated potassium channel. The chain is Potassium channel toxin Ttr-beta-KTx from Tityus trivittatus (Argentinean scorpion).